The sequence spans 474 residues: tRNA-2-methylthio-N(6)-dimethylallyladenosine synthase (474 aa).

The 118-residue stretch at 3–120 (KKLHIKTWGC…LPEMINSVRG (118 aa)) folds into the MTTase N-terminal domain. The [4Fe-4S] cluster site is built by cysteine 12, cysteine 49, cysteine 83, cysteine 157, cysteine 161, and cysteine 164. In terms of domain architecture, Radical SAM core spans 143 to 375 (RAEGPTAFVS…QERINQQAMA (233 aa)). Positions 378-441 (RRMLGTTQRI…PNSLRGKVVR (64 aa)) constitute a TRAM domain.

This sequence belongs to the methylthiotransferase family. MiaB subfamily. Monomer. Requires [4Fe-4S] cluster as cofactor.

The protein resides in the cytoplasm. The catalysed reaction is N(6)-dimethylallyladenosine(37) in tRNA + (sulfur carrier)-SH + AH2 + 2 S-adenosyl-L-methionine = 2-methylsulfanyl-N(6)-dimethylallyladenosine(37) in tRNA + (sulfur carrier)-H + 5'-deoxyadenosine + L-methionine + A + S-adenosyl-L-homocysteine + 2 H(+). Its function is as follows. Catalyzes the methylthiolation of N6-(dimethylallyl)adenosine (i(6)A), leading to the formation of 2-methylthio-N6-(dimethylallyl)adenosine (ms(2)i(6)A) at position 37 in tRNAs that read codons beginning with uridine. The protein is tRNA-2-methylthio-N(6)-dimethylallyladenosine synthase of Salmonella paratyphi A (strain ATCC 9150 / SARB42).